The sequence spans 74 residues: Small ribosomal subunit protein uS15 (74 aa).

Belongs to the universal ribosomal protein uS15 family. In terms of assembly, part of the 30S ribosomal subunit. Forms a bridge to the 50S subunit in the 70S ribosome, contacting the 23S rRNA.

Functionally, one of the primary rRNA binding proteins, it binds directly to 16S rRNA where it helps nucleate assembly of the platform of the 30S subunit by binding and bridging several RNA helices of the 16S rRNA. In terms of biological role, forms an intersubunit bridge (bridge B4) with the 23S rRNA of the 50S subunit in the ribosome. This chain is Small ribosomal subunit protein uS15, found in Onion yellows phytoplasma (strain OY-M).